The following is a 177-amino-acid chain: Endoribonuclease YbeY (177 aa).

Zn(2+) is bound by residues H118, H122, and H128.

It belongs to the endoribonuclease YbeY family. The cofactor is Zn(2+).

It is found in the cytoplasm. Functionally, single strand-specific metallo-endoribonuclease involved in late-stage 70S ribosome quality control and in maturation of the 3' terminus of the 16S rRNA. This is Endoribonuclease YbeY from Mycobacterium bovis (strain ATCC BAA-935 / AF2122/97).